The following is a 209-amino-acid chain: UPF0319 protein VF_1616 (209 aa).

A signal peptide spans 1–21 (MKIQSIFAASFCLLSSISAHA).

It belongs to the UPF0319 family.

This is UPF0319 protein VF_1616 from Aliivibrio fischeri (strain ATCC 700601 / ES114) (Vibrio fischeri).